A 152-amino-acid polypeptide reads, in one-letter code: Transcriptional regulator MraZ (152 aa).

SpoVT-AbrB domains are found at residues 5–52 and 81–124; these read AHAI…PLCE and ASEC…SETR.

Belongs to the MraZ family. Forms oligomers.

The protein localises to the cytoplasm. It is found in the nucleoid. The polypeptide is Transcriptional regulator MraZ (Tolumonas auensis (strain DSM 9187 / NBRC 110442 / TA 4)).